Consider the following 696-residue polypeptide: Protein OS-9 homolog (696 aa).

An N-terminal signal peptide occupies residues 1–15 (MLVVAFASLLGAARA). Residues Asn35, Asn46, and Asn68 are each glycosylated (N-linked (GlcNAc...) asparagine). The 119-residue stretch at 106–224 (NQCLVSQNGF…QVIVPDLCQL (119 aa)) folds into the MRH domain. Cysteines 108 and 121 form a disulfide. A mannooligosaccharide derivative contacts are provided by Trp116, Gln128, Asp178, Arg184, Glu206, and Tyr212. 2 cysteine pairs are disulfide-bonded: Cys177-Cys210 and Cys192-Cys222. N-linked (GlcNAc...) asparagine glycosylation is found at Asn276, Asn290, and Asn372. 2 disordered regions span residues 450-600 (IEAS…DNSD) and 667-696 (TLGN…DDEL). Polar residues predominate over residues 458-467 (TKASESTPVS). The segment covering 482 to 498 (RSRDKEEYFKENEKQGE) has biased composition (basic and acidic residues). Polar residues-rich tracts occupy residues 499–518 (ENNA…GTIS), 528–553 (NQKQ…SAND), and 585–597 (NIDN…TLND). Residue Asn588 is glycosylated (N-linked (GlcNAc...) asparagine). The span at 685–696 (ESDRNGVIDDEL) shows a compositional bias: basic and acidic residues.

Belongs to the OS-9 family. In terms of assembly, interacts with missfolded ER lumenal proteins.

It is found in the endoplasmic reticulum membrane. In terms of biological role, lectin involved in the quality control of the secretory pathway. As a member of the endoplasmic reticulum-associated degradation lumenal (ERAD-L) surveillance system, targets misfolded endoplasmic reticulum lumenal glycoproteins for degradation. This Candida glabrata (strain ATCC 2001 / BCRC 20586 / JCM 3761 / NBRC 0622 / NRRL Y-65 / CBS 138) (Yeast) protein is Protein OS-9 homolog (YOS9).